A 320-amino-acid chain; its full sequence is Nicotianamine synthase 3 (320 aa).

This sequence belongs to the nicotianamine synthase (NAS)-like family. In shoots.

The enzyme catalyses 3 S-adenosyl-L-methionine = nicotianamine + 3 S-methyl-5'-thioadenosine + 3 H(+). Functionally, synthesizes nicotianamine, a polyamine which serves as a sensor for the physiological iron status within the plant, and/or might be involved in the transport of iron. This Arabidopsis thaliana (Mouse-ear cress) protein is Nicotianamine synthase 3 (NAS3).